Consider the following 868-residue polypeptide: DNA mismatch repair protein MutS (868 aa).

621 to 628 serves as a coordination point for ATP; the sequence is GPNMGGKS. Residues 803–852 are disordered; the sequence is LESGDGGDTGSAQLPLFGPEPVFPPPAQPEPEPDPIREAVENLDPDGLTP. A compositionally biased stretch (pro residues) spans 823-832; that stretch reads PVFPPPAQPE.

Belongs to the DNA mismatch repair MutS family.

This protein is involved in the repair of mismatches in DNA. It is possible that it carries out the mismatch recognition step. This protein has a weak ATPase activity. The sequence is that of DNA mismatch repair protein MutS from Halorhodospira halophila (strain DSM 244 / SL1) (Ectothiorhodospira halophila (strain DSM 244 / SL1)).